The chain runs to 146 residues: MRNIAIKFAAAGILAMLAAPALAENIEVHMLNKGAEGAMVFEPAYIKANPGDTVTFIPVDKGHNVESIKDMIPEGAEKFKSKINENYVLTVTQPGAYLVKCTPHYAMGMIALIAVGDSPANLDQIVSAKKPKIVQERLEKVIASAK.

A signal peptide spans 1–23 (MRNIAIKFAAAGILAMLAAPALA). Residues 28–116 (VHMLNKGAEG…MGMIALIAVG (89 aa)) enclose the Plastocyanin-like domain. Cu cation-binding residues include His-63, Cys-101, His-104, and Met-109.

It depends on Cu cation as a cofactor.

The protein localises to the periplasm. This soluble electron transfer copper protein is required for the inactivation of copper-containing nitrite reductase in the presence of oxygen. Serves as a direct electron donor to the nitrite reductase. This chain is Pseudoazurin, found in Alcaligenes faecalis.